The following is a 155-amino-acid chain: Aspartate carbamoyltransferase regulatory chain (155 aa).

Residues cysteine 113, cysteine 118, cysteine 139, and cysteine 142 each coordinate Zn(2+).

It belongs to the PyrI family. Contains catalytic and regulatory chains. Requires Zn(2+) as cofactor.

Its function is as follows. Involved in allosteric regulation of aspartate carbamoyltransferase. In Methanosphaerula palustris (strain ATCC BAA-1556 / DSM 19958 / E1-9c), this protein is Aspartate carbamoyltransferase regulatory chain.